We begin with the raw amino-acid sequence, 76 residues long: Exodeoxyribonuclease 7 small subunit (76 aa).

Belongs to the XseB family. In terms of assembly, heterooligomer composed of large and small subunits.

It localises to the cytoplasm. The catalysed reaction is Exonucleolytic cleavage in either 5'- to 3'- or 3'- to 5'-direction to yield nucleoside 5'-phosphates.. Its function is as follows. Bidirectionally degrades single-stranded DNA into large acid-insoluble oligonucleotides, which are then degraded further into small acid-soluble oligonucleotides. The chain is Exodeoxyribonuclease 7 small subunit from Arthrobacter sp. (strain FB24).